Consider the following 31-residue polypeptide: Cyclotide vpub-A (31 aa).

A cross-link (cyclopeptide (Gly-Asn)) is located at residues 1-31; sequence GVIPCGESCVFIPCISAVIGCSCKSKVCYRN. 3 disulfide bridges follow: Cys5–Cys21, Cys9–Cys23, and Cys14–Cys28.

This sequence belongs to the cyclotide family. Bracelet subfamily. Post-translationally, this is a cyclic peptide.

Probably participates in a plant defense mechanism. The polypeptide is Cyclotide vpub-A (Viola pubescens (Downy yellow violet)).